Consider the following 968-residue polypeptide: RNA polymerase-associated protein RapA (968 aa).

The Helicase ATP-binding domain occupies 164–334 (DVGRRHAPRV…FARLRLLDPN (171 aa)). 177-184 (DEVGLGKT) contacts ATP. The DEAH box signature appears at 280 to 283 (DEAH). The Helicase C-terminal domain maps to 490–662 (RVEWLMGYLT…YLAAPENTEG (173 aa)).

Belongs to the SNF2/RAD54 helicase family. RapA subfamily. Interacts with the RNAP. Has a higher affinity for the core RNAP than for the holoenzyme. Its ATPase activity is stimulated by binding to RNAP.

In terms of biological role, transcription regulator that activates transcription by stimulating RNA polymerase (RNAP) recycling in case of stress conditions such as supercoiled DNA or high salt concentrations. Probably acts by releasing the RNAP, when it is trapped or immobilized on tightly supercoiled DNA. Does not activate transcription on linear DNA. Probably not involved in DNA repair. In Cronobacter sakazakii (strain ATCC BAA-894) (Enterobacter sakazakii), this protein is RNA polymerase-associated protein RapA.